The following is a 267-amino-acid chain: Thiazole synthase (267 aa).

The Schiff-base intermediate with DXP role is filled by K110. Residues G171, A197–G198, and N219–T220 each bind 1-deoxy-D-xylulose 5-phosphate.

The protein belongs to the ThiG family. Homotetramer. Forms heterodimers with either ThiH or ThiS.

It is found in the cytoplasm. The catalysed reaction is [ThiS sulfur-carrier protein]-C-terminal-Gly-aminoethanethioate + 2-iminoacetate + 1-deoxy-D-xylulose 5-phosphate = [ThiS sulfur-carrier protein]-C-terminal Gly-Gly + 2-[(2R,5Z)-2-carboxy-4-methylthiazol-5(2H)-ylidene]ethyl phosphate + 2 H2O + H(+). It functions in the pathway cofactor biosynthesis; thiamine diphosphate biosynthesis. Its function is as follows. Catalyzes the rearrangement of 1-deoxy-D-xylulose 5-phosphate (DXP) to produce the thiazole phosphate moiety of thiamine. Sulfur is provided by the thiocarboxylate moiety of the carrier protein ThiS. In vitro, sulfur can be provided by H(2)S. The polypeptide is Thiazole synthase (Maricaulis maris (strain MCS10) (Caulobacter maris)).